The sequence spans 271 residues: Putative pyruvate, phosphate dikinase regulatory protein (271 aa).

153 to 160 (GVSRTSKT) is an ADP binding site.

This sequence belongs to the pyruvate, phosphate/water dikinase regulatory protein family. PDRP subfamily.

The enzyme catalyses N(tele)-phospho-L-histidyl/L-threonyl-[pyruvate, phosphate dikinase] + ADP = N(tele)-phospho-L-histidyl/O-phospho-L-threonyl-[pyruvate, phosphate dikinase] + AMP + H(+). It carries out the reaction N(tele)-phospho-L-histidyl/O-phospho-L-threonyl-[pyruvate, phosphate dikinase] + phosphate + H(+) = N(tele)-phospho-L-histidyl/L-threonyl-[pyruvate, phosphate dikinase] + diphosphate. Its function is as follows. Bifunctional serine/threonine kinase and phosphorylase involved in the regulation of the pyruvate, phosphate dikinase (PPDK) by catalyzing its phosphorylation/dephosphorylation. In Shouchella clausii (strain KSM-K16) (Alkalihalobacillus clausii), this protein is Putative pyruvate, phosphate dikinase regulatory protein.